The following is a 931-amino-acid chain: Protocadherin gamma-A1 (931 aa).

The N-terminal stretch at 1 to 28 (MKIQKKLTGCSRLMLLCLSLELLLEAGA) is a signal peptide. Cadherin domains are found at residues 29–133 (GNIH…TPQF), 134–242 (QLEE…PPAF), 243–347 (TQAQ…APEV), 348–452 (TITS…SPVF), 453–562 (HQDS…APEI), and 570–682 (DGST…EPSA). At 29-692 (GNIHYSVPEE…KPNDSDLTLY (664 aa)) the chain is on the extracellular side. 3 N-linked (GlcNAc...) asparagine glycosylation sites follow: N265, N419, and N545. An N-linked (GlcNAc...) asparagine glycan is attached at N685. A helical transmembrane segment spans residues 693 to 713 (LVVAAAAVSCVFLAFVIVLLA). Residues 714-931 (HRLRRWHKSR…KKKSGKKEKK (218 aa)) are Cytoplasmic-facing. Disordered stretches follow at residues 801–840 (KKEP…WPNN) and 901–931 (ATLT…KEKK). Over residues 805–840 (FSQQAPPNTDWRFSQAQRPGTSGSQNGDDTGTWPNN) the composition is skewed to polar residues. Residues 921–931 (NKKKSGKKEKK) show a composition bias toward basic residues.

The protein resides in the cell membrane. Its function is as follows. Potential calcium-dependent cell-adhesion protein. May be involved in the establishment and maintenance of specific neuronal connections in the brain. The chain is Protocadherin gamma-A1 (PCDHGA1) from Homo sapiens (Human).